A 379-amino-acid polypeptide reads, in one-letter code: Cytochrome b (379 aa).

The next 4 helical transmembrane spans lie at 33–53 (FGSLLGLCLISQILTGLFLAM), 77–98 (WLIRNLHANGASFFFICLYLHI), 113–133 (WNIGVVLFLLVMMTAFVGYVL), and 178–198 (FFAFHFLFPFVVAGATMIHLL). Residues histidine 83 and histidine 97 each coordinate heme b. Positions 182 and 196 each coordinate heme b. A ubiquinone is bound at residue histidine 201. 4 consecutive transmembrane segments (helical) span residues 226-246 (YKDLLGFIIMLTALTMLALFY), 288-308 (LGGVLALLSSILVLMVVPILH), 320-340 (ASQLLFWILVADMLVLTWIGG), and 347-367 (YIIIGQVASVLYFSLFLVLNP).

Belongs to the cytochrome b family. As to quaternary structure, the cytochrome bc1 complex contains 3 respiratory subunits (MT-CYB, CYC1 and UQCRFS1), 2 core proteins (UQCRC1 and UQCRC2) and probably 6 low-molecular weight proteins. Heme b is required as a cofactor.

It is found in the mitochondrion inner membrane. Component of the ubiquinol-cytochrome c reductase complex (complex III or cytochrome b-c1 complex) that is part of the mitochondrial respiratory chain. The b-c1 complex mediates electron transfer from ubiquinol to cytochrome c. Contributes to the generation of a proton gradient across the mitochondrial membrane that is then used for ATP synthesis. The protein is Cytochrome b (mt-cyb) of Anguilla dieffenbachii (New Zealand longfin eel).